Consider the following 219-residue polypeptide: Large ribosomal subunit protein uL3 (219 aa).

Residues 133–153 (GRASHGNSRSHNVPGSIGMAQ) form a disordered region. Q153 is subject to N5-methylglutamine.

Belongs to the universal ribosomal protein uL3 family. In terms of assembly, part of the 50S ribosomal subunit. Forms a cluster with proteins L14 and L19. Methylated by PrmB.

In terms of biological role, one of the primary rRNA binding proteins, it binds directly near the 3'-end of the 23S rRNA, where it nucleates assembly of the 50S subunit. The chain is Large ribosomal subunit protein uL3 from Burkholderia thailandensis (strain ATCC 700388 / DSM 13276 / CCUG 48851 / CIP 106301 / E264).